A 1095-amino-acid chain; its full sequence is Tyrosine-sulfated glycopeptide receptor 1 (1095 aa).

The chain crosses the membrane as a helical span at residues 23-43; sequence PHMVLFVLLYVLSISVFFLTV. N-linked (GlcNAc...) asparagine glycosylation is found at N62 and N73. LRR repeat units lie at residues 91–115, 116–139, 141–165, 170–195, 197–221, 223–246, 247–270, 271–294, 295–318, 320–342, 344–366, 367–391, 393–415, 416–439, 441–466, 470–494, 495–517, 518–542, and 566–589; these read ENRV…VLDL, QRLS…FLSA, DQLL…SFGN, IFPI…VFLQ, AFNL…MCTA, PQLT…LSRC, SRLS…IYNL, PELE…ITRL, TKLT…IGKL, KLSS…LANC, KLVK…DFSR, FQSL…VYSC, MMTA…VLEL, ESLS…SILQ, CKKL…DFLR, FPSL…LIKL, QRVE…WLGT, LPDL…LFQL, and NPNN…IYIK. N165 carries N-linked (GlcNAc...) asparagine glycosylation. 3 N-linked (GlcNAc...) asparagine glycosylation sites follow: N199, N204, and N207. N258 is a glycosylation site (N-linked (GlcNAc...) asparagine). An N-linked (GlcNAc...) asparagine glycan is attached at N341. N377 is a glycosylation site (N-linked (GlcNAc...) asparagine). N430 carries an N-linked (GlcNAc...) asparagine glycan. N569, N592, N616, N627, N640, N662, and N714 each carry an N-linked (GlcNAc...) asparagine glycan. LRR repeat units lie at residues 604–628, 629–652, and 654–677; these read LKVL…LSNL, TNLE…LTGL, and FLSY…QFDT. Residues 721-741 traverse the membrane as a helical segment; it reads LVLGLFFGVSLILVLLALLVL. Phosphothreonine occurs at positions 792 and 800. The 272-residue stretch at 803 to 1074 folds into the Protein kinase domain; it reads FSQANIIGCG…PNIQQVVDWL (272 aa). ATP is bound by residues 809-817 and K831; that span reads IGCGGFGLV. Phosphotyrosine is present on residues Y876 and Y916. Catalysis depends on D929, which acts as the Proton acceptor. Phosphotyrosine is present on Y971.

This sequence belongs to the protein kinase superfamily. Ser/Thr protein kinase family. In terms of assembly, homo- and heterodimers with PSKR1. Interacts (via C-terminus) with AHA1 and AHA2 (via the R-domain). In terms of processing, autophosphorylated. As to expression, expressed ubiquitously, including in the shoot apical meristem and in the elongation zone of the root meristem.

The protein resides in the cell membrane. The enzyme catalyses L-seryl-[protein] + ATP = O-phospho-L-seryl-[protein] + ADP + H(+). The catalysed reaction is L-threonyl-[protein] + ATP = O-phospho-L-threonyl-[protein] + ADP + H(+). In terms of biological role, tyrosine-sulfated glycopeptide receptor with a serine/threonine-protein kinase activity. Regulates, in response to tyrosine-sulfated glycopeptide binding, a signaling cascade involved in cellular proliferation and plant growth. Not involved in PSK perception. Involved in plant immunity, with antagonistic effects on bacterial and fungal resistances. Mediates activation of the plasma membrane H(+)-ATPase by PSY1. Phosphorylates AHA2 at Thr-881. This is Tyrosine-sulfated glycopeptide receptor 1 from Arabidopsis thaliana (Mouse-ear cress).